We begin with the raw amino-acid sequence, 20 residues long: L-amino-acid oxidase L2 (20 aa).

The protein belongs to the flavin monoamine oxidase family. FIG1 subfamily. In terms of assembly, monomer. This is in contrast with most of its orthologs, that are non-covalently linked homodimers. The cofactor is FAD. N-glycosylated. Expressed by the venom gland.

The protein localises to the secreted. It catalyses the reaction an L-alpha-amino acid + O2 + H2O = a 2-oxocarboxylate + H2O2 + NH4(+). The enzyme catalyses L-leucine + O2 + H2O = 4-methyl-2-oxopentanoate + H2O2 + NH4(+). The catalysed reaction is L-phenylalanine + O2 + H2O = 3-phenylpyruvate + H2O2 + NH4(+). It carries out the reaction L-tryptophan + O2 + H2O = indole-3-pyruvate + H2O2 + NH4(+). It catalyses the reaction L-methionine + O2 + H2O = 4-methylsulfanyl-2-oxobutanoate + H2O2 + NH4(+). The enzyme catalyses L-isoleucine + O2 + H2O = (S)-3-methyl-2-oxopentanoate + H2O2 + NH4(+). The catalysed reaction is L-tyrosine + O2 + H2O = 3-(4-hydroxyphenyl)pyruvate + H2O2 + NH4(+). Its function is as follows. Catalyzes an oxidative deamination of predominantly hydrophobic and aromatic L-amino acids, thus producing hydrogen peroxide that may contribute to the diverse toxic effects of this enzyme. Is active on L-Ile, L-Leu, L-Met, L-Phe, L-Trp, and L-Tyr. Exhibits diverse biological activities, such as hemorrhage, hemolysis, edema, apoptosis of vascular endothelial cells or tumor cell lines, antibacterial and antiparasitic activities, as well as regulation of platelet aggregation. Its effect on platelets is controversial, since it either induces aggregation or inhibits agonist-induced aggregation. These different effects are probably due to different experimental conditions. The protein is L-amino-acid oxidase L2 of Daboia russelii (Russel's viper).